The following is a 306-amino-acid chain: MAALLGRDLLSLADLTPTELQELLQLATQLKSQQLKLRCNKVLGLLFSKASTRTRVSFTVAMYQLGGQVIDLNPNVTQVSRGEPVQDTARVLERYLDVLAIRTFEQQELATFAEYAKIPVINALTDLEHPCQILADLLTVQECFDSISGLTLTYVGDGNNVANSLMLGCALAGMNVRIATPSGYEPNPQVVAQAQAIADGKTEILLTNDPDLATKGASVLYTDVWASMGQEAEADDRFPIFQPYQISEQLLSLAEPNAIVLHCLPAHRGEEITEEVIEGSQSRVWQQAENRLHVQKALLASILGAE.

Residues serine 51–threonine 54, glutamine 78, arginine 102, and histidine 129–glutamine 132 contribute to the carbamoyl phosphate site. L-ornithine-binding positions include asparagine 160, aspartate 223, and serine 227–methionine 228. Residues cysteine 263–leucine 264 and arginine 291 contribute to the carbamoyl phosphate site.

The protein belongs to the aspartate/ornithine carbamoyltransferase superfamily. OTCase family.

It is found in the cytoplasm. The enzyme catalyses carbamoyl phosphate + L-ornithine = L-citrulline + phosphate + H(+). It participates in amino-acid biosynthesis; L-arginine biosynthesis; L-arginine from L-ornithine and carbamoyl phosphate: step 1/3. In terms of biological role, reversibly catalyzes the transfer of the carbamoyl group from carbamoyl phosphate (CP) to the N(epsilon) atom of ornithine (ORN) to produce L-citrulline. The sequence is that of Ornithine carbamoyltransferase from Nostoc sp. (strain PCC 7120 / SAG 25.82 / UTEX 2576).